Reading from the N-terminus, the 151-residue chain is Putative coiled-coil-helix-coiled-coil-helix domain-containing protein CHCHD2P9, mitochondrial (151 aa).

A mitochondrion-targeting transit peptide spans 1-9; that stretch reads MPRGSRSRT. Disordered stretches follow at residues 1-50 and 75-110; these read MPRG…AAAP and TQGH…PAQQ. Positions 10–26 are enriched in low complexity; sequence SRMAPPASRAPQMRAAP. The span at 27 to 38 shows a compositional bias: pro residues; the sequence is RPAPVAQPPAAA. 2 stretches are compositionally biased toward low complexity: residues 39–50 and 100–110; these read PPSAVGSSAAAP and QEPQGTQPAQQ. In terms of domain architecture, CHCH spans 111-151; the sequence is QQPCFYGIKQFLECAQNQGDIKLCEDFSKVLKQCRLAKGLA. 2 consecutive short sequence motifs (cx9C motif) follow at residues 114-124 and 134-144; these read CFYGIKQFLEC and CEDFSKVLKQC. 2 cysteine pairs are disulfide-bonded: Cys114/Cys144 and Cys124/Cys134.

The protein localises to the mitochondrion. The sequence is that of Putative coiled-coil-helix-coiled-coil-helix domain-containing protein CHCHD2P9, mitochondrial (CHCHD2P9) from Homo sapiens (Human).